Consider the following 387-residue polypeptide: DNA primase small subunit PriS (387 aa).

Catalysis depends on residues Asp-98, Asp-100, and Asp-289.

It belongs to the eukaryotic-type primase small subunit family. In terms of assembly, heterodimer of a small subunit (PriS) and a large subunit (PriL). Mg(2+) serves as cofactor. It depends on Mn(2+) as a cofactor.

In terms of biological role, catalytic subunit of DNA primase, an RNA polymerase that catalyzes the synthesis of short RNA molecules used as primers for DNA polymerase during DNA replication. The small subunit contains the primase catalytic core and has DNA synthesis activity on its own. Binding to the large subunit stabilizes and modulates the activity, increasing the rate of DNA synthesis while decreasing the length of the DNA fragments, and conferring RNA synthesis capability. The DNA polymerase activity may enable DNA primase to also catalyze primer extension after primer synthesis. May also play a role in DNA repair. The sequence is that of DNA primase small subunit PriS from Halorubrum lacusprofundi (strain ATCC 49239 / DSM 5036 / JCM 8891 / ACAM 34).